The sequence spans 120 residues: Glycine cleavage system H protein (120 aa).

The region spanning valine 17 to lysine 99 is the Lipoyl-binding domain. Lysine 58 carries the post-translational modification N6-lipoyllysine.

It belongs to the GcvH family. In terms of assembly, the glycine cleavage system is composed of four proteins: P, T, L and H. (R)-lipoate is required as a cofactor.

Functionally, the glycine cleavage system catalyzes the degradation of glycine. The H protein shuttles the methylamine group of glycine from the P protein to the T protein. The chain is Glycine cleavage system H protein from Rhizobium etli (strain ATCC 51251 / DSM 11541 / JCM 21823 / NBRC 15573 / CFN 42).